We begin with the raw amino-acid sequence, 128 residues long: Sulfurtransferase TusD (128 aa).

Cys78 serves as the catalytic Cysteine persulfide intermediate.

It belongs to the DsrE/TusD family. Heterohexamer, formed by a dimer of trimers. The hexameric TusBCD complex contains 2 copies each of TusB, TusC and TusD. The TusBCD complex interacts with TusE.

The protein resides in the cytoplasm. In terms of biological role, part of a sulfur-relay system required for 2-thiolation of 5-methylaminomethyl-2-thiouridine (mnm(5)s(2)U) at tRNA wobble positions. Accepts sulfur from TusA and transfers it in turn to TusE. The polypeptide is Sulfurtransferase TusD (Salmonella typhi).